The chain runs to 537 residues: Biotin carboxylase, chloroplastic (537 aa).

Residues 1–71 (MDASMITNSK…ATSGGLGVTC (71 aa)) constitute a chloroplast transit peptide. Residues Lys188, Lys230, 236 to 237 (GG), 272 to 275 (EKFV), and His280 each bind ATP. Residues 192-389 (RETMKNAGVP…LIEEQIRVAM (198 aa)) form the ATP-grasp domain. Lys309 contacts hydrogencarbonate. Glu347 and Glu360 together coordinate ATP. Positions 347, 360, and 362 each coordinate Mg(2+). Positions 347, 360, and 362 each coordinate Mn(2+). Positions 364, 367, and 410 each coordinate hydrogencarbonate. Arg364 is a catalytic residue. Arg410 serves as a coordination point for biotin.

Acetyl-CoA carboxylase is a heterohexamer composed of biotin carboxyl carrier protein, biotin carboxylase and two subunits each of ACCase subunit alpha and ACCase plastid-coded subunit beta (accD). Mg(2+) serves as cofactor. Mn(2+) is required as a cofactor. Accumulates in fatty acids synthesizing tissues. Mostly expressed in siliques, developing leaves, and flowers, present in roots and embryos (especially at torpedo stage), and, to a lower extent, in mature leaves.

It is found in the plastid. Its subcellular location is the chloroplast. It carries out the reaction N(6)-biotinyl-L-lysyl-[protein] + hydrogencarbonate + ATP = N(6)-carboxybiotinyl-L-lysyl-[protein] + ADP + phosphate + H(+). The protein operates within lipid metabolism; malonyl-CoA biosynthesis; malonyl-CoA from acetyl-CoA: step 1/1. Its function is as follows. This protein is a component of the acetyl coenzyme A carboxylase complex; first, biotin carboxylase catalyzes the carboxylation of the carrier protein and then the transcarboxylase transfers the carboxyl group to form malonyl-CoA. In Arabidopsis thaliana (Mouse-ear cress), this protein is Biotin carboxylase, chloroplastic (CAC2).